Here is a 122-residue protein sequence, read N- to C-terminus: Protein TCL1B3 (122 aa).

This sequence belongs to the TCL1 family.

The chain is Protein TCL1B3 (Tcl1b3) from Mus musculus (Mouse).